Here is a 204-residue protein sequence, read N- to C-terminus: ATP phosphoribosyltransferase (204 aa).

It belongs to the ATP phosphoribosyltransferase family. Short subfamily. As to quaternary structure, heteromultimer composed of HisG and HisZ subunits.

Its subcellular location is the cytoplasm. It catalyses the reaction 1-(5-phospho-beta-D-ribosyl)-ATP + diphosphate = 5-phospho-alpha-D-ribose 1-diphosphate + ATP. Its pathway is amino-acid biosynthesis; L-histidine biosynthesis; L-histidine from 5-phospho-alpha-D-ribose 1-diphosphate: step 1/9. Its function is as follows. Catalyzes the condensation of ATP and 5-phosphoribose 1-diphosphate to form N'-(5'-phosphoribosyl)-ATP (PR-ATP). Has a crucial role in the pathway because the rate of histidine biosynthesis seems to be controlled primarily by regulation of HisG enzymatic activity. This Staphylococcus aureus (strain Mu3 / ATCC 700698) protein is ATP phosphoribosyltransferase.